Here is a 208-residue protein sequence, read N- to C-terminus: Methylthioribulose-1-phosphate dehydratase (208 aa).

Residues H101 and H103 each coordinate Zn(2+).

Belongs to the aldolase class II family. MtnB subfamily. Requires Zn(2+) as cofactor.

The catalysed reaction is 5-(methylsulfanyl)-D-ribulose 1-phosphate = 5-methylsulfanyl-2,3-dioxopentyl phosphate + H2O. It participates in amino-acid biosynthesis; L-methionine biosynthesis via salvage pathway; L-methionine from S-methyl-5-thio-alpha-D-ribose 1-phosphate: step 2/6. Catalyzes the dehydration of methylthioribulose-1-phosphate (MTRu-1-P) into 2,3-diketo-5-methylthiopentyl-1-phosphate (DK-MTP-1-P). This Gluconobacter oxydans (strain 621H) (Gluconobacter suboxydans) protein is Methylthioribulose-1-phosphate dehydratase.